Consider the following 59-residue polypeptide: MMKRQKRDRLERARARGYQAGVVGKQKEACPYQCLDARGHWLGGWRDAMEGRGSGLFMK.

Belongs to the ribosome modulation factor family.

Its subcellular location is the cytoplasm. In terms of biological role, during stationary phase, converts 70S ribosomes to an inactive dimeric form (100S ribosomes). This Aeromonas veronii (strain B565) protein is Ribosome modulation factor.